We begin with the raw amino-acid sequence, 346 residues long: Extracellular protease (346 aa).

Positions methionine 1 to alanine 21 are cleaved as a signal peptide. Histidine 296 serves as a coordination point for Zn(2+). Glutamate 297 is an active-site residue. Residues histidine 300 and aspartate 309 each contribute to the Zn(2+) site.

This sequence belongs to the peptidase M35 family. Requires Zn(2+) as cofactor.

Heat-labile protease. This is Extracellular protease from Aeromonas hydrophila.